The chain runs to 543 residues: Tetrahydroberberine oxidase (543 aa).

The N-terminal stretch at 1–26 (MIPNSSSSSILSLLVLLLFSTSSSWA) is a signal peptide. A disulfide bond links C37 and C97. Residues N54, N74, N135, N142, N162, N295, N335, N440, and N482 are each glycosylated (N-linked (GlcNAc...) asparagine). The FAD-binding PCMH-type domain maps to 75–250 (STQKPEFIIT…LSWKVKLVPV (176 aa)). Residues 112–175 (HDVEGLSYVS…NTLGFPAGFC (64 aa)) constitute a cross-link (6-(S-cysteinyl)-8alpha-(pros-histidyl)-FAD (His-Cys)).

The protein belongs to the oxygen-dependent FAD-linked oxidoreductase family. Requires FAD as cofactor. The FAD cofactor is bound via a bicovalent 6-S-cysteinyl, 8alpha-N1-histidyl FAD linkage.

It catalyses the reaction (S)-canadine + 2 O2 + H(+) = berberine + 2 H2O2. Functionally, catalyzes the oxidation of different tetrahydroprotoberberines, such as (S)-canadine, (S)-scoulerine and (S)-tetrahydropalmatine. This chain is Tetrahydroberberine oxidase, found in Argemone mexicana (Mexican prickly poppy).